Reading from the N-terminus, the 142-residue chain is Large-conductance mechanosensitive channel (142 aa).

3 consecutive transmembrane segments (helical) span residues 10–30, 40–60, and 86–106; these read FAVK…GAFG, LIMP…LFVV, and GNFI…FMMV.

Belongs to the MscL family. Homopentamer.

The protein localises to the cell inner membrane. Its function is as follows. Channel that opens in response to stretch forces in the membrane lipid bilayer. May participate in the regulation of osmotic pressure changes within the cell. In Delftia acidovorans (strain DSM 14801 / SPH-1), this protein is Large-conductance mechanosensitive channel.